Here is a 597-residue protein sequence, read N- to C-terminus: Tubulin polyglutamylase ttll-4 (597 aa).

Polar residues predominate over residues 1–18; sequence MSSGYSSAPSVSHTSSEA. Disordered stretches follow at residues 1-39 and 80-107; these read MSSG…DEQR and SKSK…FLKS. Acidic residues predominate over residues 26-35; the sequence is YEDGVDEEAS. Positions 134 to 472 constitute a TTL domain; that stretch reads QSRLTWCHNS…HVPPSFDKLH (339 aa). Residues Lys-250, 256–257, 278–281, and 291–293 contribute to the ATP site; these read RG, QHYI, and KFD. Residue Arg-256 participates in a protein binding. Arg-317 is a binding site for L-glutamate. 338–339 lines the ATP pocket; that stretch reads TN. Residues Tyr-340, Ser-341, and Lys-358 each contribute to the L-glutamate site. Residues Asp-418, Glu-431, and Asn-433 each coordinate Mg(2+). Lys-449 provides a ligand contact to L-glutamate.

The protein belongs to the tubulin--tyrosine ligase family. Requires Mg(2+) as cofactor.

It carries out the reaction L-glutamyl-[protein] + L-glutamate + ATP = gamma-L-glutamyl-L-glutamyl-[protein] + ADP + phosphate + H(+). Functionally, monoglutamylase which modifies tubulin, adding a single glutamate on the gamma-carboxyl group of specific glutamate residues of target proteins. Involved in the side-chain initiation step of the polyglutamylation reaction but not in the elongation step. Preferentially modifies beta-tail tubulin over the alpha-tubulin. Involved in side-chain glutamylation of tubulin in sensory cilia. Together with ttll-5 and ttll-11, required for male mating. The polypeptide is Tubulin polyglutamylase ttll-4 (ttll-4) (Caenorhabditis briggsae).